A 646-amino-acid chain; its full sequence is P-selectin (646 aa).

Residues 1–41 (MASCPKAIWNWRFQRAVFRTVQLLCFSVLIFEVINQKEVSA) form the signal peptide. Residues 42–587 (WTYHYSNKTY…QAGPLTIQET (546 aa)) are Extracellular-facing. 3 N-linked (GlcNAc...) asparagine glycosylation sites follow: asparagine 48, asparagine 54, and asparagine 80. In terms of domain architecture, C-type lectin spans 58 to 158 (AFCQKYYTDL…PCWKRKRALC (101 aa)). Cystine bridges form between cysteine 60-cysteine 158, cysteine 131-cysteine 150, cysteine 163-cysteine 174, cysteine 168-cysteine 183, cysteine 185-cysteine 194, cysteine 200-cysteine 244, cysteine 230-cysteine 257, cysteine 262-cysteine 306, cysteine 292-cysteine 319, cysteine 324-cysteine 368, cysteine 354-cysteine 381, cysteine 386-cysteine 430, cysteine 416-cysteine 443, cysteine 458-cysteine 502, cysteine 488-cysteine 515, cysteine 520-cysteine 564, and cysteine 550-cysteine 577. 3 residues coordinate Ca(2+): glutamate 121, asparagine 123, and asparagine 124. Asparagine 123 serves as a coordination point for a carbohydrate. A carbohydrate is bound by residues glutamate 133 and asparagine 146. Residues asparagine 146 and aspartate 147 each coordinate Ca(2+). An EGF-like domain is found at 159–195 (YRASCQDMSCSKQGECIETIGNYTCSCYPGFYGPECE). Asparagine 180 carries N-linked (GlcNAc...) asparagine glycosylation. Sushi domains lie at 198–259 (RECG…QCVA), 260–321 (VQCP…VCKA), 322–383 (LQCQ…ECQA), 384–445 (VTCA…TCEE), 456–517 (VQCP…TCRA), and 518–579 (VKCA…TCQA). 2 N-linked (GlcNAc...) asparagine glycosylation sites follow: asparagine 212 and asparagine 219. An N-linked (GlcNAc...) asparagine glycan is attached at asparagine 336. N-linked (GlcNAc...) asparagine glycosylation is present at asparagine 481. N-linked (GlcNAc...) asparagine glycans are attached at residues asparagine 532, asparagine 539, and asparagine 557. The chain crosses the membrane as a helical span at residues 588 to 611 (LTYVGGAAAGTTGLVTGSILLALL). Residues 612–646 (RRRCRQKDDGKSPLNPQSHLGTYGVFTNAAFDPSP) lie on the Cytoplasmic side of the membrane. Positions 634–637 (YGVF) match the Endocytosis signal motif. The tract at residues 637 to 646 (FTNAAFDPSP) is interaction with SNX17.

This sequence belongs to the selectin/LECAM family. In terms of assembly, interacts with SNX17. Interacts with SELPLG/PSGL1 and PODXL2 and mediates neutrophil adhesion and leukocyte rolling. This interaction requires the sialyl-Lewis X epitope of SELPLG and PODXL2, and specific tyrosine sulfation on SELPLG. Interacts (via C-type lectin domain) with alpha-IIb/beta3 integrin ITGA2B:ITGB3 and alpha-V/beta-3 integrin ITGAV:ITGB3. Interacts with alpha5/beta1 integrin ITGA5:ITGB1 and alpha4/beta1 integrin ITGA4:ITGB. In terms of tissue distribution, stored in the alpha-granules of platelets and Weibel-Palade bodies of endothelial cells. Upon cell activation by agonists, P-selectin is transported rapidly to the cell surface.

The protein resides in the cell membrane. Ca(2+)-dependent receptor for myeloid cells that binds to carbohydrates on neutrophils and monocytes. Mediates the interaction of activated endothelial cells or platelets with leukocytes. The ligand recognized is sialyl-Lewis X. Mediates rapid rolling of leukocyte rolling over vascular surfaces during the initial steps in inflammation through interaction with SELPLG. Mediates cell-cell interactions and cell adhesion via the interaction with integrin alpha-IIb/beta3 (ITGA2B:ITGB3) and integrin alpha-V/beta-3 (ITGAV:ITGB3). The protein is P-selectin (SELP) of Bos taurus (Bovine).